The chain runs to 230 residues: MALGKRLKKAREGVDRTKLYPLADAIKMIKERATSKFDETIEVAINLGVDPRHADQMVRGVVMLPNGTGRTLRVGVFARGAKAEEAKAAGADVVGAEDLVEKVQNGNIDFDRCIATPDMMPLVGRLGKVLGPRGMMPNPKIGTVTMDVTGAVKGAKGGSVEFRVEKAGIIQAGVGKASFTEDKLVENIKALADAVVKAKPAGAKGTYVQRVAVSSTMGPGVKVEPGTVLA.

The protein belongs to the universal ribosomal protein uL1 family. Part of the 50S ribosomal subunit.

Functionally, binds directly to 23S rRNA. The L1 stalk is quite mobile in the ribosome, and is involved in E site tRNA release. In terms of biological role, protein L1 is also a translational repressor protein, it controls the translation of the L11 operon by binding to its mRNA. The polypeptide is Large ribosomal subunit protein uL1 (Bradyrhizobium sp. (strain ORS 278)).